The chain runs to 82 residues: Large ribosomal subunit protein bL31B (82 aa).

Belongs to the bacterial ribosomal protein bL31 family. Type B subfamily. Part of the 50S ribosomal subunit.

This chain is Large ribosomal subunit protein bL31B, found in Acinetobacter baylyi (strain ATCC 33305 / BD413 / ADP1).